The sequence spans 189 residues: Ribosome maturation factor RimM (189 aa).

A PRC barrel domain is found at 96 to 169 (EDEFYYADLE…TLLIDPLAAG (74 aa)).

This sequence belongs to the RimM family. In terms of assembly, binds ribosomal protein uS19.

Its subcellular location is the cytoplasm. Its function is as follows. An accessory protein needed during the final step in the assembly of 30S ribosomal subunit, possibly for assembly of the head region. Essential for efficient processing of 16S rRNA. May be needed both before and after RbfA during the maturation of 16S rRNA. It has affinity for free ribosomal 30S subunits but not for 70S ribosomes. The protein is Ribosome maturation factor RimM of Rhizobium johnstonii (strain DSM 114642 / LMG 32736 / 3841) (Rhizobium leguminosarum bv. viciae).